A 908-amino-acid chain; its full sequence is Protein translocase subunit SecA (908 aa).

ATP contacts are provided by residues Gln-87, 105 to 109 (GEGKT), and Asp-511. The span at 559–570 (ERHESRRIDNQL) shows a compositional bias: basic and acidic residues. 2 disordered regions span residues 559 to 582 (ERHE…DPGS) and 841 to 908 (RRRR…GRLE). A compositionally biased stretch (low complexity) spans 847-856 (LAQQMQRAQA). Over residues 862–873 (TEEDSDAEEQAE) the composition is skewed to acidic residues. Cys-892, Cys-894, Cys-903, and His-904 together coordinate Zn(2+). Over residues 898-908 (KKYKQCHGRLE) the composition is skewed to basic residues.

This sequence belongs to the SecA family. As to quaternary structure, monomer and homodimer. Part of the essential Sec protein translocation apparatus which comprises SecA, SecYEG and auxiliary proteins SecDF-YajC and YidC. Zn(2+) is required as a cofactor.

It localises to the cell inner membrane. Its subcellular location is the cytoplasm. The enzyme catalyses ATP + H2O + cellular proteinSide 1 = ADP + phosphate + cellular proteinSide 2.. Part of the Sec protein translocase complex. Interacts with the SecYEG preprotein conducting channel. Has a central role in coupling the hydrolysis of ATP to the transfer of proteins into and across the cell membrane, serving both as a receptor for the preprotein-SecB complex and as an ATP-driven molecular motor driving the stepwise translocation of polypeptide chains across the membrane. The chain is Protein translocase subunit SecA from Hahella chejuensis (strain KCTC 2396).